Reading from the N-terminus, the 1178-residue chain is Topoisomerase 1-associated factor 1 (1178 aa).

Disordered regions lie at residues 576–596 (KQDD…DEEL), 792–811 (SWES…PMIP), 896–965 (DARG…VLEE), and 980–1178 (KIKS…SDSE). The segment covering 580–596 (QAIDVEDEEHASEDEEL) has biased composition (acidic residues). A compositionally biased stretch (basic and acidic residues) spans 896 to 905 (DARGGGRDEQ). Acidic residues predominate over residues 911–921 (FGSDSEGEDNV). Composition is skewed to basic and acidic residues over residues 981–991 (IKSDLYIHASD), 1001–1015 (EFFR…EQAA), and 1025–1034 (VVEEISDKSS). A compositionally biased stretch (polar residues) spans 1079–1092 (EAQSPDSPGLGSSS). Residues 1105–1116 (SDEDELEFDDDL) show a composition bias toward acidic residues. A compositionally biased stretch (basic and acidic residues) spans 1117–1128 (AFSRDRNRRKDF). Residues 1138–1147 (EPAQQDADPA) are compositionally biased toward low complexity. Over residues 1148–1157 (APDEDDDEDA) the composition is skewed to acidic residues.

Belongs to the timeless family. Component of the fork protection complex (FPC) consisting of tof1 and csm3.

The protein localises to the nucleus. Functionally, forms a fork protection complex (FPC) with csm3 and which is required for chromosome segregation during meiosis and DNA damage repair. FPC coordinates leading and lagging strand synthesis and moves with the replication fork. FPC stabilizes replication forks in a configuration that is recognized by replication checkpoint sensors. The polypeptide is Topoisomerase 1-associated factor 1 (tof1) (Aspergillus clavatus (strain ATCC 1007 / CBS 513.65 / DSM 816 / NCTC 3887 / NRRL 1 / QM 1276 / 107)).